Consider the following 396-residue polypeptide: Acetate kinase (396 aa).

Asn8 provides a ligand contact to Mg(2+). Lys15 contributes to the ATP binding site. Substrate is bound at residue Arg89. The active-site Proton donor/acceptor is the Asp146. Residues 206-210 (HIGNG), 283-285 (DMR), and 331-335 (GVGEN) each bind ATP. Glu383 is a Mg(2+) binding site.

It belongs to the acetokinase family. In terms of assembly, homodimer. Mg(2+) serves as cofactor. Requires Mn(2+) as cofactor.

It is found in the cytoplasm. It carries out the reaction acetate + ATP = acetyl phosphate + ADP. The protein operates within metabolic intermediate biosynthesis; acetyl-CoA biosynthesis; acetyl-CoA from acetate: step 1/2. Catalyzes the formation of acetyl phosphate from acetate and ATP. Can also catalyze the reverse reaction. In Streptococcus pneumoniae (strain 70585), this protein is Acetate kinase.